The sequence spans 193 residues: dCTP deaminase (193 aa).

DCTP is bound by residues 110–115, Asp-128, 136–138, Tyr-171, Lys-178, and Gln-182; these read RSSLAR and VLE. Glu-138 acts as the Proton donor/acceptor in catalysis.

This sequence belongs to the dCTP deaminase family. In terms of assembly, homotrimer.

The enzyme catalyses dCTP + H2O + H(+) = dUTP + NH4(+). Its pathway is pyrimidine metabolism; dUMP biosynthesis; dUMP from dCTP (dUTP route): step 1/2. Functionally, catalyzes the deamination of dCTP to dUTP. This Buchnera aphidicola subsp. Baizongia pistaciae (strain Bp) protein is dCTP deaminase.